A 132-amino-acid polypeptide reads, in one-letter code: MKKTGILNSHLAKLADDLGHTDRVCIGDLGLPVPNGIPKIDLSLTSGIPSFQEVLDIYLENILVEKVILAEEIKEANPDQLSRLLAKLDNSVSIEYVSHDHLKQMTQDVKAVIRTGENTPYSNIILQSGVII.

His-20 (proton donor) is an active-site residue. Substrate-binding positions include Asp-28, His-99, and 121–123 (YSN).

This sequence belongs to the RbsD / FucU family. RbsD subfamily. As to quaternary structure, homodecamer.

It is found in the cytoplasm. It carries out the reaction beta-D-ribopyranose = beta-D-ribofuranose. It functions in the pathway carbohydrate metabolism; D-ribose degradation; D-ribose 5-phosphate from beta-D-ribopyranose: step 1/2. Its function is as follows. Catalyzes the interconversion of beta-pyran and beta-furan forms of D-ribose. The chain is D-ribose pyranase from Streptococcus agalactiae serotype III (strain NEM316).